A 254-amino-acid polypeptide reads, in one-letter code: UPF0246 protein CPE2152 (254 aa).

It belongs to the UPF0246 family.

The chain is UPF0246 protein CPE2152 from Clostridium perfringens (strain 13 / Type A).